The chain runs to 44 residues: Thioredoxin (44 aa).

One can recognise a Thioredoxin domain in the interval Ile2 to Glu44. A disulfide bridge links Cys29 with Cys32.

The protein belongs to the thioredoxin family.

Functionally, participates in various redox reactions through the reversible oxidation of its active center dithiol to a disulfide and catalyzes dithiol-disulfide exchange reactions. This chain is Thioredoxin (trxA), found in Tissierella creatinophila.